The sequence spans 358 residues: Plancitoxin-1 (358 aa).

The first 26 residues, 1-26 (MPSSVIMFTFLALTVLTAVMVGTSEA), serve as a signal peptide directing secretion. N-linked (GlcNAc...) asparagine glycosylation occurs at asparagine 274. Histidine 303 is a catalytic residue.

It belongs to the DNase II family. Plancitoxin is a heterodimer of alpha and beta subunits; disulfide-linked by a single disulfide bond. Venom gland.

Its subcellular location is the secreted. The catalysed reaction is Endonucleolytic cleavage to nucleoside 3'-phosphates and 3'-phosphooligonucleotide end-products.. Hydrolyzes DNA with an optimum pH of 7.2. Is potently hepatotoxic. It induces caspase-independent apoptosis (on rat liver cells) through the following procedure: binding to a specific receptor in the cytoplasmic membrane, entering the cell, entering the nucleus and degrading DNA. The chain is Plancitoxin-1 from Acanthaster planci (Crown-of-thorns starfish).